The sequence spans 574 residues: Proline--tRNA ligase (574 aa).

This sequence belongs to the class-II aminoacyl-tRNA synthetase family. ProS type 1 subfamily. As to quaternary structure, homodimer.

It is found in the cytoplasm. It carries out the reaction tRNA(Pro) + L-proline + ATP = L-prolyl-tRNA(Pro) + AMP + diphosphate. Functionally, catalyzes the attachment of proline to tRNA(Pro) in a two-step reaction: proline is first activated by ATP to form Pro-AMP and then transferred to the acceptor end of tRNA(Pro). As ProRS can inadvertently accommodate and process non-cognate amino acids such as alanine and cysteine, to avoid such errors it has two additional distinct editing activities against alanine. One activity is designated as 'pretransfer' editing and involves the tRNA(Pro)-independent hydrolysis of activated Ala-AMP. The other activity is designated 'posttransfer' editing and involves deacylation of mischarged Ala-tRNA(Pro). The misacylated Cys-tRNA(Pro) is not edited by ProRS. The chain is Proline--tRNA ligase from Pseudoalteromonas translucida (strain TAC 125).